Consider the following 360-residue polypeptide: Phenylalanine--tRNA ligase alpha subunit (360 aa).

Residue glutamate 255 participates in Mg(2+) binding.

The protein belongs to the class-II aminoacyl-tRNA synthetase family. Phe-tRNA synthetase alpha subunit type 1 subfamily. As to quaternary structure, tetramer of two alpha and two beta subunits. Requires Mg(2+) as cofactor.

The protein resides in the cytoplasm. The enzyme catalyses tRNA(Phe) + L-phenylalanine + ATP = L-phenylalanyl-tRNA(Phe) + AMP + diphosphate + H(+). The sequence is that of Phenylalanine--tRNA ligase alpha subunit from Rhizorhabdus wittichii (strain DSM 6014 / CCUG 31198 / JCM 15750 / NBRC 105917 / EY 4224 / RW1) (Sphingomonas wittichii).